We begin with the raw amino-acid sequence, 64 residues long: DNA gyrase inhibitor YacG (64 aa).

Zn(2+) contacts are provided by Cys-9, Cys-12, Cys-28, and Cys-32. The segment at 45-64 is disordered; the sequence is KRIPSAGDLSDSDDWSEQQP. Residues 54–64 show a composition bias toward acidic residues; it reads SDSDDWSEQQP.

This sequence belongs to the DNA gyrase inhibitor YacG family. Interacts with GyrB. Zn(2+) is required as a cofactor.

Its function is as follows. Inhibits all the catalytic activities of DNA gyrase by preventing its interaction with DNA. Acts by binding directly to the C-terminal domain of GyrB, which probably disrupts DNA binding by the gyrase. This Klebsiella pneumoniae subsp. pneumoniae (strain ATCC 700721 / MGH 78578) protein is DNA gyrase inhibitor YacG.